Consider the following 341-residue polypeptide: Trace amine-associated receptor 13c (341 aa).

Residues 1–34 (MDLSSQEYDPSQFCFPAVNNSCLKGTHHVSTQTV) are Extracellular-facing. A glycan (N-linked (GlcNAc...) asparagine) is linked at Asn-19. Cystine bridges form between Cys-22/Cys-186 and Cys-105/Cys-186. The chain crosses the membrane as a helical span at residues 35 to 55 (VYLILASAMTVTVLGNSVVII). Over 56–68 (SIAHFKQLQTPTN) the chain is Cytoplasmic. A helical membrane pass occupies residues 69 to 89 (ILVMSLALADLLLGLVVMPFS). The Extracellular segment spans residues 90–105 (MIRSVDGCWYYGETFC). The chain crosses the membrane as a helical span at residues 106-126 (LLHTGFDLFLTSVSIFHLIFI). The Cytoplasmic portion of the chain corresponds to 127-147 (AVDRHQAVCFPLQYPTRITIP). Residues 148-168 (VAWVMVMISWSMAAFYSYGVV) form a helical membrane-spanning segment. At 169–195 (YSKANLEGLEEYIASVYCMGGCTLYFN) the chain is on the extracellular side. Residues 196 to 219 (ALWSVLDTLLTFFLPCSVMVGLYA) traverse the membrane as a helical segment. Over 220–257 (RIFVVAKKHIKSITEANQNENENVFKNPRRSERKAAKT) the chain is Cytoplasmic. Residues 258–278 (LGIVVGAFILCWLPFFINSLV) traverse the membrane as a helical segment. Topologically, residues 279 to 292 (DPYINFSTPYALFD) are extracellular. Asn-283 carries N-linked (GlcNAc...) asparagine glycosylation. Residues 293 to 313 (AFGWLGYTNSTLNPIIYGLFY) traverse the membrane as a helical segment. Over 314–341 (PWFRKTLSLIVTLRIFEPNSSDINLFTV) the chain is Cytoplasmic.

Belongs to the G-protein coupled receptor 1 family. Expressed in olfactory epithelium (at protein level). Detected in a sparse population of olfactory sensory neurons.

The protein resides in the cell membrane. In terms of biological role, olfactory receptor for medium length odd-chained diamines including cadaverine which is generated by bacterial decarboxylation of the basic amino acid lysine and contributes to the odor of decomposing tissue. Mediates pronounced innate aversion behavior to cadaverine. The sequence is that of Trace amine-associated receptor 13c from Danio rerio (Zebrafish).